Reading from the N-terminus, the 1658-residue chain is Protein TIC 214 (1658 aa).

The next 6 membrane-spanning stretches (helical) occupy residues 28–48 (FGLYYGFLAALPIGLSQILTI), 52–72 (LLGGNTGGTLAVSGSIMGQLI), 82–102 (IYVMLLKPHAITLLVLPYMLF), 130–150 (IFLDSFILSLLNPVILPSPVF), 165–185 (ISFVISSSFGWLGGYILFINL), and 199–219 (VNYPLIKSIINQIFSIIILAL).

The protein belongs to the TIC214 family. In terms of assembly, part of the Tic complex.

It localises to the plastid. It is found in the chloroplast inner membrane. Involved in protein precursor import into chloroplasts. May be part of an intermediate translocation complex acting as a protein-conducting channel at the inner envelope. The chain is Protein TIC 214 from Huperzia lucidula (Shining clubmoss).